The sequence spans 238 residues: EKC/KEOPS complex subunit SPAP27G11.07c (238 aa).

The Protein kinase domain occupies 20-238 (EKKLTVVKQG…MRGRKRTMIG (219 aa)). ATP-binding positions include 26 to 34 (VKQGAEAIT) and Lys-48. Asp-148 (proton acceptor) is an active-site residue.

This sequence belongs to the protein kinase superfamily. BUD32 family. As to quaternary structure, component of the EKC/KEOPS complex composed of at least SPAP27G11.07c/BUD32, cgi121, gon7, pgp2 and SPAC4H3.13/PCC1; the whole complex dimerizes.

It is found in the cytoplasm. Its subcellular location is the nucleus. It localises to the chromosome. The protein resides in the telomere. The enzyme catalyses L-seryl-[protein] + ATP = O-phospho-L-seryl-[protein] + ADP + H(+). It carries out the reaction L-threonyl-[protein] + ATP = O-phospho-L-threonyl-[protein] + ADP + H(+). In terms of biological role, component of the EKC/KEOPS complex that is required for the formation of a threonylcarbamoyl group on adenosine at position 37 (t(6)A37) in tRNAs that read codons beginning with adenine. The complex is probably involved in the transfer of the threonylcarbamoyl moiety of threonylcarbamoyl-AMP (TC-AMP) to the N6 group of A37. BUD32 has ATPase activity in the context of the EKC/KEOPS complex and likely plays a supporting role to the catalytic subunit KAE1. The EKC/KEOPS complex also promotes both telomere uncapping and telomere elongation. The complex is required for efficient recruitment of transcriptional coactivators. The sequence is that of EKC/KEOPS complex subunit SPAP27G11.07c from Schizosaccharomyces pombe (strain 972 / ATCC 24843) (Fission yeast).